A 331-amino-acid polypeptide reads, in one-letter code: Lipoyl synthase (331 aa).

7 residues coordinate [4Fe-4S] cluster: cysteine 60, cysteine 65, cysteine 71, cysteine 86, cysteine 90, cysteine 93, and serine 301. One can recognise a Radical SAM core domain in the interval 72 to 290; sequence WSRGTATFML…REEGMQLGFL (219 aa).

Belongs to the radical SAM superfamily. Lipoyl synthase family. [4Fe-4S] cluster is required as a cofactor.

The protein resides in the cytoplasm. The enzyme catalyses [[Fe-S] cluster scaffold protein carrying a second [4Fe-4S](2+) cluster] + N(6)-octanoyl-L-lysyl-[protein] + 2 oxidized [2Fe-2S]-[ferredoxin] + 2 S-adenosyl-L-methionine + 4 H(+) = [[Fe-S] cluster scaffold protein] + N(6)-[(R)-dihydrolipoyl]-L-lysyl-[protein] + 4 Fe(3+) + 2 hydrogen sulfide + 2 5'-deoxyadenosine + 2 L-methionine + 2 reduced [2Fe-2S]-[ferredoxin]. Its pathway is protein modification; protein lipoylation via endogenous pathway; protein N(6)-(lipoyl)lysine from octanoyl-[acyl-carrier-protein]: step 2/2. Functionally, catalyzes the radical-mediated insertion of two sulfur atoms into the C-6 and C-8 positions of the octanoyl moiety bound to the lipoyl domains of lipoate-dependent enzymes, thereby converting the octanoylated domains into lipoylated derivatives. This chain is Lipoyl synthase, found in Deinococcus radiodurans (strain ATCC 13939 / DSM 20539 / JCM 16871 / CCUG 27074 / LMG 4051 / NBRC 15346 / NCIMB 9279 / VKM B-1422 / R1).